The chain runs to 230 residues: MSRLSAAVVAIDGPAGTGKSSVSRRLARELGARFLDTGAMYRIVTLAVLRAGADPSDIAAVETIASTVQMSLGYDPDGDSCYLAGEDVSVEIRGDAVTRAVSAVSSVPAVRTRLVELQRTMAEGPGSIVVEGRDIGTVVFPDAPVKIFLTASAETRARRRNAQNVAAGLADDYDGVLADVRRRDHLDSTRAVSPLQAAGDAVIVDTSDMTEAEVVAHLLELVTRRSEAVR.

Residue 13-21 coordinates ATP; that stretch reads GPAGTGKSS.

It belongs to the cytidylate kinase family. Type 1 subfamily.

The protein resides in the cytoplasm. It catalyses the reaction CMP + ATP = CDP + ADP. It carries out the reaction dCMP + ATP = dCDP + ADP. The chain is Cytidylate kinase from Mycobacterium tuberculosis (strain ATCC 25177 / H37Ra).